Consider the following 338-residue polypeptide: Probable family 20 transposase (338 aa).

Belongs to the transposase 20 family.

In terms of biological role, required for the transposition of an insertion element. The sequence is that of Probable family 20 transposase from Pseudomonas aeruginosa (strain ATCC 15692 / DSM 22644 / CIP 104116 / JCM 14847 / LMG 12228 / 1C / PRS 101 / PAO1).